Here is a 106-residue protein sequence, read N- to C-terminus: DNA-directed RNA polymerase subunit omega (106 aa).

The segment at 76–106 (REPAREAAEPAGEAPEEQQRAAGEREDQGAA) is disordered. Residues 92 to 106 (EQQRAAGEREDQGAA) show a composition bias toward basic and acidic residues.

It belongs to the RNA polymerase subunit omega family. The RNAP catalytic core consists of 2 alpha, 1 beta, 1 beta' and 1 omega subunit. When a sigma factor is associated with the core the holoenzyme is formed, which can initiate transcription.

It carries out the reaction RNA(n) + a ribonucleoside 5'-triphosphate = RNA(n+1) + diphosphate. In terms of biological role, promotes RNA polymerase assembly. Latches the N- and C-terminal regions of the beta' subunit thereby facilitating its interaction with the beta and alpha subunits. In Rubrobacter xylanophilus (strain DSM 9941 / JCM 11954 / NBRC 16129 / PRD-1), this protein is DNA-directed RNA polymerase subunit omega.